The chain runs to 66 residues: MKAADARAMSADQLKDELGNLKKEQFNLRFQKATGQLEKSSRINEVRKDIARVKTIARQKAAEAKA.

It belongs to the universal ribosomal protein uL29 family.

This is Large ribosomal subunit protein uL29 from Allorhizobium ampelinum (strain ATCC BAA-846 / DSM 112012 / S4) (Agrobacterium vitis (strain S4)).